We begin with the raw amino-acid sequence, 434 residues long: D-amino acid dehydrogenase (434 aa).

3–17 is a binding site for FAD; it reads VVILGSGVVGVASAW.

The protein belongs to the DadA oxidoreductase family. Requires FAD as cofactor.

The enzyme catalyses a D-alpha-amino acid + A + H2O = a 2-oxocarboxylate + AH2 + NH4(+). The protein operates within amino-acid degradation; D-alanine degradation; NH(3) and pyruvate from D-alanine: step 1/1. Functionally, oxidative deamination of D-amino acids. This is D-amino acid dehydrogenase from Yersinia enterocolitica serotype O:8 / biotype 1B (strain NCTC 13174 / 8081).